Here is a 1388-residue protein sequence, read N- to C-terminus: CRISPR-associated endonuclease Cas9 2 (1388 aa).

The active-site For RuvC-like nuclease domain is aspartate 10. Mg(2+) contacts are provided by aspartate 10, glutamate 763, and glutamate 767. Residues 771–928 form the HNH Cas9-type domain; sequence TNQGKSNSQQ…DKAGFIQRQL (158 aa). Histidine 847 (proton acceptor for HNH nuclease domain) is an active-site residue. Histidine 990 lines the Mg(2+) pocket. Basic and acidic residues predominate over residues 1100-1109; the sequence is EQNHGLDRGK. The tract at residues 1100 to 1130 is disordered; it reads EQNHGLDRGKPKGLFNANLSSKPKPNSNENL. A PAM-interacting domain (PI) region spans residues 1102–1388; sequence NHGLDRGKPK…RIDLAKLGEG (287 aa). Residues 1116 to 1129 are compositionally biased toward polar residues; the sequence is ANLSSKPKPNSNEN.

This sequence belongs to the CRISPR-associated protein Cas9 family. Subtype II-A subfamily. As to quaternary structure, monomer. Binds crRNA and tracrRNA. Requires Mg(2+) as cofactor.

Functionally, CRISPR (clustered regularly interspaced short palindromic repeat) is an adaptive immune system that provides protection against mobile genetic elements (viruses, transposable elements and conjugative plasmids). CRISPR clusters contain spacers, sequences complementary to antecedent mobile elements, and target invading nucleic acids. CRISPR clusters are transcribed and processed into CRISPR RNA (crRNA). In type II CRISPR systems correct processing of pre-crRNA requires a trans-encoded small RNA (tracrRNA), endogenous ribonuclease 3 (rnc) and this protein. The tracrRNA serves as a guide for ribonuclease 3-aided processing of pre-crRNA. Subsequently Cas9/crRNA/tracrRNA endonucleolytically cleaves linear or circular dsDNA target complementary to the spacer yielding blunt ends; Cas9 is inactive in the absence of the 2 guide RNAs (gRNA). Cas9 recognizes a 3'-G-rich protospacer adjacent motif (PAM, GGG in this organism) in the CRISPR repeat sequences to help distinguish self versus nonself, as targets within the bacterial CRISPR locus do not have PAMs. PAM recognition is also required for catalytic activity. Complements the gRNA coprocessing defect in a cas9 deletion in S.pyogenes strain 370, and cuts target DNA in Cas9:gRNAs mixing experiments with S.mutans strain UA159. The protein is CRISPR-associated endonuclease Cas9 2 of Streptococcus thermophilus (strain ATCC BAA-491 / LMD-9).